The primary structure comprises 348 residues: Dihydroorotase (348 aa).

His-14 and His-16 together coordinate Zn(2+). Residues 16–18 and Asn-42 contribute to the substrate site; that span reads HLR. Residues Lys-100, His-137, and His-175 each contribute to the Zn(2+) site. An N6-carboxylysine modification is found at Lys-100. Substrate is bound at residue His-137. Leu-220 is a substrate binding site. A Zn(2+)-binding site is contributed by Asp-248. The active site involves Asp-248. Substrate is bound by residues His-252 and Ala-264.

Belongs to the metallo-dependent hydrolases superfamily. DHOase family. Class II DHOase subfamily. Homodimer. The cofactor is Zn(2+).

It carries out the reaction (S)-dihydroorotate + H2O = N-carbamoyl-L-aspartate + H(+). It functions in the pathway pyrimidine metabolism; UMP biosynthesis via de novo pathway; (S)-dihydroorotate from bicarbonate: step 3/3. In terms of biological role, catalyzes the reversible cyclization of carbamoyl aspartate to dihydroorotate. The sequence is that of Dihydroorotase from Pseudomonas fluorescens (strain Pf0-1).